The sequence spans 132 residues: Small ribosomal subunit protein uS8 (132 aa).

It belongs to the universal ribosomal protein uS8 family. In terms of assembly, part of the 30S ribosomal subunit. Contacts proteins S5 and S12.

In terms of biological role, one of the primary rRNA binding proteins, it binds directly to 16S rRNA central domain where it helps coordinate assembly of the platform of the 30S subunit. The protein is Small ribosomal subunit protein uS8 of Gluconobacter oxydans (strain 621H) (Gluconobacter suboxydans).